Reading from the N-terminus, the 168-residue chain is HTH-type transcriptional regulator IscR (168 aa).

One can recognise an HTH rrf2-type domain in the interval 2–131 (KLTSKGRYAV…NNITLGELMK (130 aa)). The H-T-H motif DNA-binding region spans 28–51 (LADISERQGISLSYLEQLFSKLRK). [2Fe-2S] cluster-binding residues include Cys92, Cys98, and Cys104.

Requires [2Fe-2S] cluster as cofactor.

Functionally, regulates the transcription of several operons and genes involved in the biogenesis of Fe-S clusters and Fe-S-containing proteins. The sequence is that of HTH-type transcriptional regulator IscR from Vibrio campbellii (strain ATCC BAA-1116).